Reading from the N-terminus, the 452-residue chain is Tissue alpha-L-fucosidase (452 aa).

The N-terminal stretch at 1–17 (MLLLLLLLLVAAAQAVA) is a signal peptide. 4 N-linked (GlcNAc...) asparagine glycosylation sites follow: Asn-227, Asn-254, Asn-368, and Asn-378.

This sequence belongs to the glycosyl hydrolase 29 family. In terms of assembly, homotetramer.

It is found in the lysosome. The catalysed reaction is an alpha-L-fucoside + H2O = L-fucose + an alcohol. The enzyme catalyses a neolactoside IV(2)-alpha-Fuc-nLc4Cer(d18:1(4E)) + H2O = a neolactoside nLc4Cer(d18:1(4E)) + L-fucose. It carries out the reaction a neolactoside IV(2)-alpha-Fuc-nLc4Cer(d18:0) + H2O = a neolactoside nLc4Cer(d18:0) + L-fucose. Functionally, alpha-L-fucosidase is responsible for hydrolyzing the alpha-1,6-linked fucose joined to the reducing-end N-acetylglucosamine of the carbohydrate moieties of glycoproteins. This Mus musculus (Mouse) protein is Tissue alpha-L-fucosidase (Fuca1).